The following is a 179-amino-acid chain: ATP synthase subunit delta (179 aa).

This sequence belongs to the ATPase delta chain family. F-type ATPases have 2 components, F(1) - the catalytic core - and F(0) - the membrane proton channel. F(1) has five subunits: alpha(3), beta(3), gamma(1), delta(1), epsilon(1). F(0) has three main subunits: a(1), b(2) and c(10-14). The alpha and beta chains form an alternating ring which encloses part of the gamma chain. F(1) is attached to F(0) by a central stalk formed by the gamma and epsilon chains, while a peripheral stalk is formed by the delta and b chains.

It is found in the cell inner membrane. Its function is as follows. F(1)F(0) ATP synthase produces ATP from ADP in the presence of a proton or sodium gradient. F-type ATPases consist of two structural domains, F(1) containing the extramembraneous catalytic core and F(0) containing the membrane proton channel, linked together by a central stalk and a peripheral stalk. During catalysis, ATP synthesis in the catalytic domain of F(1) is coupled via a rotary mechanism of the central stalk subunits to proton translocation. This protein is part of the stalk that links CF(0) to CF(1). It either transmits conformational changes from CF(0) to CF(1) or is implicated in proton conduction. The protein is ATP synthase subunit delta of Acidobacterium capsulatum (strain ATCC 51196 / DSM 11244 / BCRC 80197 / JCM 7670 / NBRC 15755 / NCIMB 13165 / 161).